The sequence spans 310 residues: MSEELSKKHTTRLNKLQKRLRREVGSAIADYNMIEDGDKIMCCLSGGKDSYAMLDILMNLQQRAPIQFEIIAVNLDQKQPGFPEHVLPAYLDKLNVPYHILEKDTYSIVKDKIPEGKTTCSLCSRLRRGTLYGFAQRIGATKIALGHHRDDIIETLFLNMFFGGKMKAMPPKLLSDDGANVVIRPLAYCREKDLEEYANLREFPIIPCNLCGSQENLKRAAVKDMLNQWDRQYPGRIETIFTAMQNTAPSQGVDREQFDFVSLTRDPNAPMRGDVAEANLPAFDFLDIANSGRIDLDAAKRIDIVNTYEV.

A PP-loop motif motif is present at residues 45-50 (SGGKDS). Positions 120, 123, and 211 each coordinate [4Fe-4S] cluster.

It belongs to the TtcA family. In terms of assembly, homodimer. Mg(2+) serves as cofactor. It depends on [4Fe-4S] cluster as a cofactor.

The protein localises to the cytoplasm. The enzyme catalyses cytidine(32) in tRNA + S-sulfanyl-L-cysteinyl-[cysteine desulfurase] + AH2 + ATP = 2-thiocytidine(32) in tRNA + L-cysteinyl-[cysteine desulfurase] + A + AMP + diphosphate + H(+). It participates in tRNA modification. In terms of biological role, catalyzes the ATP-dependent 2-thiolation of cytidine in position 32 of tRNA, to form 2-thiocytidine (s(2)C32). The sulfur atoms are provided by the cysteine/cysteine desulfurase (IscS) system. This chain is tRNA-cytidine(32) 2-sulfurtransferase, found in Shewanella baltica (strain OS185).